A 382-amino-acid polypeptide reads, in one-letter code: Alanine racemase 1 (382 aa).

The active-site Proton acceptor; specific for D-alanine is K39. K39 carries the post-translational modification N6-(pyridoxal phosphate)lysine. R138 contributes to the substrate binding site. Y265 functions as the Proton acceptor; specific for L-alanine in the catalytic mechanism. M312 is a binding site for substrate.

Belongs to the alanine racemase family. Pyridoxal 5'-phosphate is required as a cofactor.

The catalysed reaction is L-alanine = D-alanine. Its pathway is amino-acid biosynthesis; D-alanine biosynthesis; D-alanine from L-alanine: step 1/1. Its function is as follows. Catalyzes the interconversion of L-alanine and D-alanine. May also act on other amino acids. In Staphylococcus aureus (strain NCTC 8325 / PS 47), this protein is Alanine racemase 1 (alr1).